The primary structure comprises 810 residues: Chloride channel protein (810 aa).

The Cytoplasmic segment spans residues 2–48 (SHEKNEASGNPEAQSWKAQEAMLGVKTEVSRWRAVKNCLYRHLVKVL). Helical transmembrane passes span 49 to 86 (GEDW…LFAM) and 93 to 116 (LQYL…CQIV). Positions 122–126 (GSGIP) match the Selectivity filter part_1 motif. Ser-123 provides a ligand contact to chloride. Positions 125-132 (IPELKTII) form an intramembrane region, helical. The next 2 membrane-spanning stretches (helical) occupy residues 141-160 (LTLR…LSAG) and 166-184 (EGPF…NQLL). A Selectivity filter part_2 motif is present at residues 164 to 168 (GKEGP). 2 intramembrane regions (helical) span residues 201–213 (ILTV…ISCC) and 217–225 (PLAGVLFSI). 3 helical membrane passes run 237 to 254 (YWRG…FRVL), 283 to 311 (LPAF…IVFM), and 320 to 339 (ILKK…LATL). A glycan (N-linked (GlcNAc...) asparagine) is linked at Asn-365. The next 2 helical transmembrane spans lie at 389-408 (NIFI…AALA) and 416-439 (GAFV…MALL). Positions 416 to 420 (GAFVP) match the Selectivity filter part_3 motif. Phe-418 is a chloride binding site. Residues 456–470 (GEYAVIGAAAMTGAV) constitute an intramembrane region (helical). The segment at residues 471–472 (TH) is an intramembrane region (note=Loop between two helices). The helical intramembrane region spans 473–484 (AVSTAVICFELT). Residues 485 to 489 (GQISH) constitute an intramembrane region (note=Loop between two helices). Residues 490–506 (VLPMMVAVILANMVAQG) form a helical membrane-spanning segment. Residues 507–810 (LQPSLYDSII…RTATSNSSGK (304 aa)) are Cytoplasmic-facing. Residue Tyr-512 coordinates chloride. In terms of domain architecture, CBS 1 spans 543-601 (MVRDVTSIASTSTYGDLLHVLRQTKLKFFPFVDTPETNTLLGSIERTEVEGLLQRRISA). 2 disordered regions span residues 604–631 (RQPA…DVPG) and 658–688 (KVQT…KHKG). The 58-residue stretch at 724 to 781 (IDQSPFQLVEGTSLQKTHTLFSLLGLDRAYVTSMGKLVGVVALAEIQAAIEGSYQKGF) folds into the CBS 2 domain.

The protein belongs to the chloride channel (TC 2.A.49) family. ClC-0 subfamily. As to quaternary structure, homodimer. Each subunit has channel activity ('Double barreled channel').

The protein localises to the membrane. Functionally, voltage-gated chloride channel. This channel is thought to ensure the high conductance of the non-innervated membrane of the electrocyte necessary for efficient current generation caused by sodium influx through the acetylcholine receptor at the innervated membrane. This Tetronarce californica (Pacific electric ray) protein is Chloride channel protein.